The sequence spans 440 residues: Transposon Ty1-OL Gag polyprotein (440 aa).

Polar residues-rich tracts occupy residues 1-23, 48-60, and 127-152; these read MESQ…SVTS, TKAN…TPAS, and QSQF…GNTF. Disordered stretches follow at residues 1 to 93, 126 to 173, and 352 to 440; these read MESQ…MMTQ, PQSQ…RPPP, and GSRN…PGTY. The span at 153-165 shows a compositional bias: low complexity; sequence TDSSSADSDMTST. The tract at residues 299 to 401 is RNA-binding; that stretch reads NNGIHINNKV…NSKSKTARAH (103 aa). Residues 402–418 are compositionally biased toward low complexity; the sequence is NVSTSNNSPSTDNDSIS. Ser416 bears the Phosphoserine mark. Polar residues predominate over residues 419–428; that stretch reads KSTTEPIQLN. Positions 429–440 are enriched in basic and acidic residues; it reads NKHDLHLRPGTY.

As to quaternary structure, homotrimer.

It is found in the cytoplasm. Capsid protein (CA) is the structural component of the virus-like particle (VLP), forming the shell that encapsulates the retrotransposons dimeric RNA genome. The particles are assembled from trimer-clustered units and there are holes in the capsid shells that allow for the diffusion of macromolecules. CA also has nucleocapsid-like chaperone activity, promoting primer tRNA(i)-Met annealing to the multipartite primer-binding site (PBS), dimerization of Ty1 RNA and initiation of reverse transcription. In Saccharomyces cerevisiae (strain ATCC 204508 / S288c) (Baker's yeast), this protein is Transposon Ty1-OL Gag polyprotein (TY1A-OL).